Reading from the N-terminus, the 141-residue chain is VLSANDKANVKAAWDKVGGQAANYGAEALERTFASFPTTKTYFPHYDLSPGSAQVKAHGKKVADALTKAVGSMDDLPGALSALSDLHAHKLRVDPVNFKLLSHCLLVTLAAHHPADFTPAVHASLDKFLASVSTVLTSKYR.

In terms of domain architecture, Globin spans 1–141; that stretch reads VLSANDKANV…VSTVLTSKYR (141 aa). Ser-3 carries the phosphoserine modification. Residues Lys-7 and Lys-11 each carry the N6-succinyllysine modification. The residue at position 16 (Lys-16) is an N6-acetyllysine; alternate. Lys-16 carries the post-translational modification N6-succinyllysine; alternate. Tyr-24 carries the phosphotyrosine modification. Ser-35 is subject to Phosphoserine. Lys-40 is subject to N6-succinyllysine. Ser-49 bears the Phosphoserine mark. His-58 serves as a coordination point for O2. His-87 provides a ligand contact to heme b. Position 102 is a phosphoserine (Ser-102). Position 108 is a phosphothreonine (Thr-108). A phosphoserine mark is found at Ser-124 and Ser-131. Residues Thr-134 and Thr-137 each carry the phosphothreonine modification. A Phosphoserine modification is found at Ser-138.

This sequence belongs to the globin family. In terms of assembly, heterotetramer of two alpha chains and two beta chains. In terms of tissue distribution, red blood cells.

Its function is as follows. Involved in oxygen transport from the lung to the various peripheral tissues. In terms of biological role, hemopressin acts as an antagonist peptide of the cannabinoid receptor CNR1. Hemopressin-binding efficiently blocks cannabinoid receptor CNR1 and subsequent signaling. This Suncus murinus (Asian house shrew) protein is Hemoglobin subunit alpha (HBA).